The chain runs to 845 residues: Protein translocase subunit SecA 1 (845 aa).

ATP contacts are provided by residues Q91, 109 to 113 (GEGKT), and D498. The tract at residues 795–845 (TDFGTAQHVSAEDGKEKAKKQPIVKGDKVGRNDPCPCGSGKKYKNCHGKEE) is disordered. The Zn(2+) site is built by C829, C831, C840, and H841. Residues 835-845 (KKYKNCHGKEE) show a composition bias toward basic residues.

It belongs to the SecA family. In terms of assembly, monomer and homodimer. Part of the essential Sec protein translocation apparatus which comprises SecA, SecYEG and auxiliary proteins SecDF. Other proteins may also be involved. It depends on Zn(2+) as a cofactor.

The protein resides in the cell membrane. It is found in the cytoplasm. It carries out the reaction ATP + H2O + cellular proteinSide 1 = ADP + phosphate + cellular proteinSide 2.. Functionally, part of the Sec protein translocase complex. Interacts with the SecYEG preprotein conducting channel. Has a central role in coupling the hydrolysis of ATP to the transfer of proteins into and across the cell membrane, serving as an ATP-driven molecular motor driving the stepwise translocation of polypeptide chains across the membrane. The protein is Protein translocase subunit SecA 1 of Staphylococcus haemolyticus (strain JCSC1435).